The chain runs to 30 residues: Mejucin (30 aa).

Its subcellular location is the secreted. In terms of biological role, bacteriocin that inhibits the growth of several Gram-positive bacteria, especially the food-borne pathogens L.monocytogenes, B.cereus strain ATCC 11778, B.cereus strain ATCC 21366, B.cereus strain ATCC 10876 and B.cereus strain ATCC 14579. Likely to act by disrupting the pathogen membrane resulting in leakage of intracellular constituents. Does not inhibit the growth of Gram-negative bacteria. This Bacillus subtilis protein is Mejucin.